The chain runs to 346 residues: Glycerol-1-phosphate dehydrogenase [NAD(P)+] (346 aa).

NAD(+)-binding positions include 93–97 (GTIID) and 115–118 (TTAS). Asp-120 serves as a coordination point for substrate. Position 124 (Ser-124) interacts with NAD(+). Asp-167 is a binding site for substrate. Zn(2+)-binding residues include Asp-167 and His-247. Position 251 (His-251) interacts with substrate. A Zn(2+)-binding site is contributed by His-263.

It belongs to the glycerol-1-phosphate dehydrogenase family. Requires Zn(2+) as cofactor.

Its subcellular location is the cytoplasm. The enzyme catalyses sn-glycerol 1-phosphate + NAD(+) = dihydroxyacetone phosphate + NADH + H(+). It carries out the reaction sn-glycerol 1-phosphate + NADP(+) = dihydroxyacetone phosphate + NADPH + H(+). Its pathway is membrane lipid metabolism; glycerophospholipid metabolism. Functionally, catalyzes the NAD(P)H-dependent reduction of dihydroxyacetonephosphate (DHAP or glycerone phosphate) to glycerol 1-phosphate (G1P). The G1P thus generated is used as the glycerophosphate backbone of phospholipids in the cellular membranes of Archaea. This Pyrococcus furiosus (strain ATCC 43587 / DSM 3638 / JCM 8422 / Vc1) protein is Glycerol-1-phosphate dehydrogenase [NAD(P)+].